The following is a 253-amino-acid chain: CENP-A recruiting complex protein mis20 (253 aa).

A disordered region spans residues 113–136 (TGPTTSKNKHPSHSNTIRSPPYKV).

As to quaternary structure, component of the CENP-A recruiting complex composed of at least mis16, mis19, mis19 and mis20.

It is found in the cytoplasm. Its subcellular location is the cytoskeleton. The protein localises to the microtubule organizing center. The protein resides in the spindle pole body. It localises to the chromosome. It is found in the centromere. Component of the CENP-A recruiting complex that ensures the integrity of mitotic spindles through maintenance of kinetochore factors mis6/CENP-I and cnp1/CENP-A. Seems dispensable for proper chromosome segregation. The polypeptide is CENP-A recruiting complex protein mis20 (Schizosaccharomyces pombe (strain 972 / ATCC 24843) (Fission yeast)).